A 749-amino-acid polypeptide reads, in one-letter code: 5-methyltetrahydropteroyltriglutamate--homocysteine methyltransferase (749 aa).

5-methyltetrahydropteroyltri-L-glutamate-binding positions include 15–18 and Lys114; that span reads RELK. L-homocysteine contacts are provided by residues 425-427 and Glu478; that span reads IGS. L-methionine contacts are provided by residues 425 to 427 and Glu478; that span reads IGS. Trp555 provides a ligand contact to 5-methyltetrahydropteroyltri-L-glutamate. Asp593 provides a ligand contact to L-homocysteine. Asp593 is a binding site for L-methionine. 5-methyltetrahydropteroyltri-L-glutamate is bound at residue Glu599. The Zn(2+) site is built by His636, Cys638, and Glu660. The Proton donor role is filled by His689. A Zn(2+)-binding site is contributed by Cys721.

The protein belongs to the vitamin-B12 independent methionine synthase family. The cofactor is Zn(2+).

It catalyses the reaction 5-methyltetrahydropteroyltri-L-glutamate + L-homocysteine = tetrahydropteroyltri-L-glutamate + L-methionine. It participates in amino-acid biosynthesis; L-methionine biosynthesis via de novo pathway; L-methionine from L-homocysteine (MetE route): step 1/1. Its function is as follows. Catalyzes the transfer of a methyl group from 5-methyltetrahydrofolate to homocysteine resulting in methionine formation. The protein is 5-methyltetrahydropteroyltriglutamate--homocysteine methyltransferase of Streptococcus pneumoniae serotype 19F (strain G54).